A 306-amino-acid chain; its full sequence is Homoserine O-acetyltransferase (306 aa).

Cysteine 142 (acyl-thioester intermediate) is an active-site residue. Lysine 163 and serine 192 together coordinate substrate. Histidine 235 functions as the Proton acceptor in the catalytic mechanism. Glutamate 237 is an active-site residue. Arginine 249 is a substrate binding site.

This sequence belongs to the MetA family.

The protein localises to the cytoplasm. The enzyme catalyses L-homoserine + acetyl-CoA = O-acetyl-L-homoserine + CoA. It participates in amino-acid biosynthesis; L-methionine biosynthesis via de novo pathway; O-acetyl-L-homoserine from L-homoserine: step 1/1. Transfers an acetyl group from acetyl-CoA to L-homoserine, forming acetyl-L-homoserine. In Brevibacillus brevis (strain 47 / JCM 6285 / NBRC 100599), this protein is Homoserine O-acetyltransferase.